Here is a 1004-residue protein sequence, read N- to C-terminus: NACHT, LRR and PYD domains-containing protein 9C (1004 aa).

A Pyrin domain is found at Met1 to Lys92. The 323-residue stretch at Ala143–Val465 folds into the NACHT domain. Residue Gly149–Thr156 participates in ATP binding. 5 LRR repeats span residues Lys750–Cys770, Val779–Glu800, His807–Glu828, Thr836–Ala857, and Asn864–Cys884.

The protein belongs to the NLRP family. In terms of tissue distribution, oocyte specific.

Its subcellular location is the cytoplasm. In terms of biological role, may be involved in inflammation. This Mus musculus (Mouse) protein is NACHT, LRR and PYD domains-containing protein 9C (Nlrp9c).